Consider the following 367-residue polypeptide: Isoflavone 4'-O-methyltransferase (367 aa).

Residues 209 to 212 (VGGG), Asp233, 233 to 234 (DQ), 253 to 254 (DM), and Lys267 contribute to the S-adenosyl-L-methionine site. His271 acts as the Proton acceptor in catalysis.

Belongs to the class I-like SAM-binding methyltransferase superfamily. Cation-independent O-methyltransferase family. COMT subfamily.

It catalyses the reaction a 4'-hydroxyisoflavone + S-adenosyl-L-methionine = a 4'-methoxyisoflavone + S-adenosyl-L-homocysteine + H(+). The catalysed reaction is (2R,3S)-2,4',7-trihydroxyisoflavanone + S-adenosyl-L-methionine = (2R,3S)-2,7-dihydroxy-4'-methoxyisoflavanone + S-adenosyl-L-homocysteine + H(+). In terms of biological role, 2-hydroxyisoflavanone 4'-O-methyltransferase involved in the biosynthesis of formononetin. Can use 2,7,4'-trihydroxyisoflavanone, (+)-6a-hydroxymaackiain or medicarpin as substrate, but not daidzein or (-)-6a-hydroxymaackiain. The chain is Isoflavone 4'-O-methyltransferase (HI4'OMT) from Glycyrrhiza echinata (Licorice).